A 564-amino-acid chain; its full sequence is Proline--tRNA ligase (564 aa).

Belongs to the class-II aminoacyl-tRNA synthetase family. ProS type 1 subfamily. As to quaternary structure, homodimer.

The protein resides in the cytoplasm. The enzyme catalyses tRNA(Pro) + L-proline + ATP = L-prolyl-tRNA(Pro) + AMP + diphosphate. Its function is as follows. Catalyzes the attachment of proline to tRNA(Pro) in a two-step reaction: proline is first activated by ATP to form Pro-AMP and then transferred to the acceptor end of tRNA(Pro). As ProRS can inadvertently accommodate and process non-cognate amino acids such as alanine and cysteine, to avoid such errors it has two additional distinct editing activities against alanine. One activity is designated as 'pretransfer' editing and involves the tRNA(Pro)-independent hydrolysis of activated Ala-AMP. The other activity is designated 'posttransfer' editing and involves deacylation of mischarged Ala-tRNA(Pro). The misacylated Cys-tRNA(Pro) is not edited by ProRS. This Xylella fastidiosa (strain M12) protein is Proline--tRNA ligase.